Here is a 693-residue protein sequence, read N- to C-terminus: Golgin subfamily A member 6C (693 aa).

3 disordered regions span residues 20-71 (NKLA…DSQY), 497-547 (LPGE…GTEQ), and 629-693 (NPAD…MQDT). Residues 73–611 (ELAVALESSS…KLLELQELVL (539 aa)) adopt a coiled-coil conformation. A compositionally biased stretch (basic and acidic residues) spans 537-547 (LPKEKADGTEQ). Residues 679–693 (PVQQIVQLSPVMQDT) show a composition bias toward polar residues.

Belongs to the GOLGA6 family.

This is Golgin subfamily A member 6C (GOLGA6C) from Homo sapiens (Human).